We begin with the raw amino-acid sequence, 347 residues long: 4-hydroxy-2-oxovalerate aldolase (347 aa).

Residues 11 to 262 form the Pyruvate carboxyltransferase domain; it reads PVVVDTTLRD…NPGLDVFKLL (252 aa). 19-20 provides a ligand contact to substrate; that stretch reads RD. Asp20 serves as a coordination point for Mn(2+). The active-site Proton acceptor is the His23. The substrate site is built by Ser173 and His201. His201 and His203 together coordinate Mn(2+). Substrate is bound at residue Tyr292.

Belongs to the 4-hydroxy-2-oxovalerate aldolase family. In terms of assembly, homodimer. Can also form a heterotetramer composed of two aldolase (TTHB246) and two dehydrogenase (TTHB247) subunits. Upon complex formation, the aldolase shows a 5-fold increase in substrate affinity, while the dehydrogenase shows a 3-fold decrease; the kcat values of each enzyme are reduced by 2-fold when they are in a complex. Co(2+) serves as cofactor. The cofactor is Ni(2+). Mn(2+) is required as a cofactor.

The enzyme catalyses (S)-4-hydroxy-2-oxopentanoate = acetaldehyde + pyruvate. The catalysed reaction is (S)-4-hydroxy-2-oxohexanoate = propanal + pyruvate. Appears to be allosterically activated by NADH. In terms of biological role, catalyzes the retro-aldol cleavage of both 4-hydroxy-2-oxopentanoate (HOPA) and 4-hydroxy-2-oxohexanoate (HOHA) to pyruvate and acetaldehyde or propanaldehyde, respectively. The aldehydes produced by this reaction are directly channeled to the dehydrogenase TTHB247, ensuring that these toxic aldehydes are sequestered from cellular components. Is involved in the meta-cleavage pathway for the degradation of aromatic compounds. Appears to be stereospecific since it can cleave (4S)-4-hydroxy-2-oxopentanoate but not the (4R) isomer. Is not able to catalyze the aldol addition of 2-oxobutyrate with acetaldehyde; this indicates that the enzyme is specific for pyruvate as the carbonyl donor. In Thermus thermophilus (strain ATCC 27634 / DSM 579 / HB8), this protein is 4-hydroxy-2-oxovalerate aldolase.